The chain runs to 488 residues: Palmitoleoyl-protein carboxylesterase notum1 (488 aa).

The N-terminal stretch at 1–20 (MAGALCVTLLLLLSTNTVSG) is a signal peptide. The N-linked (GlcNAc...) asparagine glycan is linked to Asn-90. Residues Ser-226, Asp-334, and His-383 each act as charge relay system in the active site.

It belongs to the pectinacetylesterase family. Notum subfamily. Expressed in the egg and through cleavage to gastrulation stages. Enriched in the animal (prospective ectoderm) and dorsal regions in early gastrula. Shows a dynamic expression during embryogenesis, in particular during neural induction and antero-posterior (AP) patterning.

It localises to the secreted. The enzyme catalyses [Wnt protein]-O-(9Z)-hexadecenoyl-L-serine + H2O = [Wnt protein]-L-serine + (9Z)-hexadecenoate + H(+). Its function is as follows. Carboxylesterase that acts as a key negative regulator of the Wnt signaling pathway by specifically mediating depalmitoleoylation of WNT proteins. Serine palmitoleoylation of WNT proteins is required for efficient binding to frizzled receptors. Functions in the prospective ectoderm and is required for neural induction. The polypeptide is Palmitoleoyl-protein carboxylesterase notum1 (Xenopus laevis (African clawed frog)).